The chain runs to 371 residues: Choline kinase B1 (371 aa).

It belongs to the choline/ethanolamine kinase family. The cofactor is Mg(2+).

The catalysed reaction is choline + ATP = phosphocholine + ADP + H(+). The sequence is that of Choline kinase B1 (ckb-1) from Caenorhabditis elegans.